A 321-amino-acid chain; its full sequence is Trem-like transcript 2 protein (321 aa).

A signal peptide spans 1 to 18 (MAPAFLLLLLLWPQGCVS). The Extracellular portion of the chain corresponds to 19-268 (GPSADSVYTK…PSIRHQDVYS (250 aa)). The region spanning 20-121 (PSADSVYTKV…ILYPLMGFQL (102 aa)) is the Ig-like V-type domain. Cystine bridges form between C41/C105 and C56/C63. N-linked (GlcNAc...) asparagine glycosylation is present at N89. 2 stretches are compositionally biased toward polar residues: residues 189–220 (GYSF…NARD) and 227–241 (SIST…RSPT). Residues 189–241 (GYSFTATSTTSQGPRRTMGSQTVTASPSNARDSSAGPESISTKSGDLSTRSPT) are disordered. The chain crosses the membrane as a helical span at residues 269-289 (TVLGVVLTLLVLMLIMVYGFW). Residues 290–321 (KKRHMASYSMCSDPSTRDPPGRPEPYVEVYLI) lie on the Cytoplasmic side of the membrane.

In terms of assembly, interacts with CD276 and this interaction enhances T-cell activation. Detected in cultured B-cells, T-cell leukemia and monocyte leukemia. Expressed constitutively on CD8 T-cells and induced on CD4 T-cells after activation.

Its subcellular location is the cell membrane. Its function is as follows. Cell surface receptor that may play a role in the innate and adaptive immune response. Acts as a counter-receptor for CD276 and interaction with CD276 on T-cells enhances T-cell activation. The chain is Trem-like transcript 2 protein (TREML2) from Homo sapiens (Human).